The primary structure comprises 950 residues: Valine--tRNA ligase, mitochondrial (950 aa).

The N-terminal 90 residues, 1 to 90, are a transit peptide targeting the mitochondrion; the sequence is MFHFQRSFSS…ITIQDALARF (90 aa). The short motif at 67–77 is the 'HIGH' region element; the sequence is PNITGKLHIGH. The 'KMSKS' region signature appears at 556 to 560; that stretch reads KMSKS. Residue Lys559 participates in ATP binding.

It belongs to the class-I aminoacyl-tRNA synthetase family.

It localises to the mitochondrion. The enzyme catalyses tRNA(Val) + L-valine + ATP = L-valyl-tRNA(Val) + AMP + diphosphate. The chain is Valine--tRNA ligase, mitochondrial (vas1) from Schizosaccharomyces pombe (strain 972 / ATCC 24843) (Fission yeast).